The sequence spans 268 residues: Phosphatidylglycerol--prolipoprotein diacylglyceryl transferase (268 aa).

A run of 3 helical transmembrane segments spans residues 25 to 45 (WYGV…TKVF), 57 to 77 (YLFY…HCFF), and 93 to 113 (VWHG…AVYF). Arg142 contacts a 1,2-diacyl-sn-glycero-3-phospho-(1'-sn-glycerol). 4 helical membrane-spanning segments follow: residues 151–171 (IIGI…DLLP), 175–195 (VQLY…LAYW), 204–224 (GLLL…LEFF), and 236–256 (PLSV…LLIF).

It belongs to the Lgt family.

Its subcellular location is the cell inner membrane. The enzyme catalyses L-cysteinyl-[prolipoprotein] + a 1,2-diacyl-sn-glycero-3-phospho-(1'-sn-glycerol) = an S-1,2-diacyl-sn-glyceryl-L-cysteinyl-[prolipoprotein] + sn-glycerol 1-phosphate + H(+). The protein operates within protein modification; lipoprotein biosynthesis (diacylglyceryl transfer). Catalyzes the transfer of the diacylglyceryl group from phosphatidylglycerol to the sulfhydryl group of the N-terminal cysteine of a prolipoprotein, the first step in the formation of mature lipoproteins. The chain is Phosphatidylglycerol--prolipoprotein diacylglyceryl transferase from Chloroherpeton thalassium (strain ATCC 35110 / GB-78).